The primary structure comprises 680 residues: DNA-directed RNA polymerase subunit beta' (680 aa).

Zn(2+) is bound by residues Cys69, Cys71, Cys87, and Cys90. Asp489, Asp491, and Asp493 together coordinate Mg(2+).

It belongs to the RNA polymerase beta' chain family. RpoC1 subfamily. In plastids the minimal PEP RNA polymerase catalytic core is composed of four subunits: alpha, beta, beta', and beta''. When a (nuclear-encoded) sigma factor is associated with the core the holoenzyme is formed, which can initiate transcription. The cofactor is Mg(2+). Zn(2+) is required as a cofactor.

The protein localises to the plastid. The protein resides in the chloroplast. The enzyme catalyses RNA(n) + a ribonucleoside 5'-triphosphate = RNA(n+1) + diphosphate. Functionally, DNA-dependent RNA polymerase catalyzes the transcription of DNA into RNA using the four ribonucleoside triphosphates as substrates. This is DNA-directed RNA polymerase subunit beta' from Arabis hirsuta (Hairy rock-cress).